A 369-amino-acid chain; its full sequence is Anhydro-N-acetylmuramic acid kinase (369 aa).

Position 12-19 (12-19) interacts with ATP; that stretch reads GTSLDGVD.

It belongs to the anhydro-N-acetylmuramic acid kinase family.

The catalysed reaction is 1,6-anhydro-N-acetyl-beta-muramate + ATP + H2O = N-acetyl-D-muramate 6-phosphate + ADP + H(+). It functions in the pathway amino-sugar metabolism; 1,6-anhydro-N-acetylmuramate degradation. Its pathway is cell wall biogenesis; peptidoglycan recycling. Its function is as follows. Catalyzes the specific phosphorylation of 1,6-anhydro-N-acetylmuramic acid (anhMurNAc) with the simultaneous cleavage of the 1,6-anhydro ring, generating MurNAc-6-P. Is required for the utilization of anhMurNAc either imported from the medium or derived from its own cell wall murein, and thus plays a role in cell wall recycling. In Escherichia coli O6:K15:H31 (strain 536 / UPEC), this protein is Anhydro-N-acetylmuramic acid kinase.